Consider the following 116-residue polypeptide: Putative gamma-glutamylcyclotransferase PH0828 (116 aa).

Position 13–16 (13–16 (YGTL)) interacts with substrate. The Proton acceptor role is filled by Glu76.

It belongs to the gamma-glutamylcyclotransferase family.

Its function is as follows. Putative gamma-glutamylcyclotransferase. The protein is Putative gamma-glutamylcyclotransferase PH0828 of Pyrococcus horikoshii (strain ATCC 700860 / DSM 12428 / JCM 9974 / NBRC 100139 / OT-3).